The chain runs to 132 residues: Small ribosomal subunit protein uS8 (132 aa).

Belongs to the universal ribosomal protein uS8 family. As to quaternary structure, part of the 30S ribosomal subunit. Contacts proteins S5 and S12.

Functionally, one of the primary rRNA binding proteins, it binds directly to 16S rRNA central domain where it helps coordinate assembly of the platform of the 30S subunit. The sequence is that of Small ribosomal subunit protein uS8 from Brucella anthropi (strain ATCC 49188 / DSM 6882 / CCUG 24695 / JCM 21032 / LMG 3331 / NBRC 15819 / NCTC 12168 / Alc 37) (Ochrobactrum anthropi).